The chain runs to 415 residues: MKADLVVGIQWGDEGKGKIVDSMASAYDVVVRYQGGHNAGHTIVVDGKKIALHLIPSGILYADCKNVIGNGVVVNPEALLKEMKQFEALEGRLFVSDKAHMILPYHEMLDQAREKLMEERAIGTTGKGIGPAYSDKISRNGIRMGELRDIPKLVEKIMEYQEAHAYLSDIYGVKLLGREEITERMSDYAKRLLPFIVDTTKLLWDAMDRGQRILLEGAQGSMLDIDHGTYPFVTSSTTTASGACSGTGLAPKHIGEVVGIAKAYCTRVGNGPFPTEDFGSEGNLLREKGKEFGTTTGRPRRCGWFDAIAVRHACRLNGCENLALMKLDVLDGFPEVKVCVAYLYEGKEIDYIPYDCEGVTPVYKSFAGWDHSEGIREFDALPKSAKEYVLEIEKITGARVSIISTGPDRKDTIRR.

GTP-binding positions include 12–18 (GDEGKGK) and 40–42 (GHT). Asp-13 acts as the Proton acceptor in catalysis. Residues Asp-13 and Gly-40 each contribute to the Mg(2+) site. IMP contacts are provided by residues 13–16 (DEGK), 38–41 (NAGH), Thr-125, Arg-139, Gln-219, Thr-234, and Arg-298. The active-site Proton donor is the His-41. Substrate is bound at residue 294-300 (TTTGRPR). GTP is bound by residues Arg-300, 326 to 328 (KLD), and 404 to 406 (STG).

This sequence belongs to the adenylosuccinate synthetase family. As to quaternary structure, homodimer. Mg(2+) is required as a cofactor.

The protein localises to the cytoplasm. It carries out the reaction IMP + L-aspartate + GTP = N(6)-(1,2-dicarboxyethyl)-AMP + GDP + phosphate + 2 H(+). It functions in the pathway purine metabolism; AMP biosynthesis via de novo pathway; AMP from IMP: step 1/2. In terms of biological role, plays an important role in the de novo pathway of purine nucleotide biosynthesis. Catalyzes the first committed step in the biosynthesis of AMP from IMP. This chain is Adenylosuccinate synthetase, found in Wolinella succinogenes (strain ATCC 29543 / DSM 1740 / CCUG 13145 / JCM 31913 / LMG 7466 / NCTC 11488 / FDC 602W) (Vibrio succinogenes).